Here is a 273-residue protein sequence, read N- to C-terminus: Putative pyruvate, phosphate dikinase regulatory protein (273 aa).

ADP is bound at residue 149-156; the sequence is GPSRTSKT.

It belongs to the pyruvate, phosphate/water dikinase regulatory protein family. PDRP subfamily.

The catalysed reaction is N(tele)-phospho-L-histidyl/L-threonyl-[pyruvate, phosphate dikinase] + ADP = N(tele)-phospho-L-histidyl/O-phospho-L-threonyl-[pyruvate, phosphate dikinase] + AMP + H(+). The enzyme catalyses N(tele)-phospho-L-histidyl/O-phospho-L-threonyl-[pyruvate, phosphate dikinase] + phosphate + H(+) = N(tele)-phospho-L-histidyl/L-threonyl-[pyruvate, phosphate dikinase] + diphosphate. Functionally, bifunctional serine/threonine kinase and phosphorylase involved in the regulation of the pyruvate, phosphate dikinase (PPDK) by catalyzing its phosphorylation/dephosphorylation. This chain is Putative pyruvate, phosphate dikinase regulatory protein, found in Rickettsia akari (strain Hartford).